The primary structure comprises 820 residues: MAVSPHKTYPIVITHGEKYTLFNDESIGKGAYSEVYRGRTESGRLVAVKTACKKLEVAAIGIEIEILKKLKGASNIVQYFGSNHTKMAPGSVTSETISFAMEYASSSLEAEMRRPKNHRGLSSNALIDLVVDCSMALSALREHNIAHRDIKHMNILLFPGTPTRGRRSTHLFKLCDMGCSKSLSENSSHEMRTLVGTPNLLHPFLAHEMVDPLMAQNRHNWKTKSAYTSEQCDLWALGCTLYFCATGKFPFEHERNNKSLYHKAVVALTQNPDAIAMVLVQKGRDPGRRTDIFEFQPVTELPAKFTRYPKWLVSTMTCLLRSFFHEPSIEYYAKVADAMRNSKRRTFSSVDQMSIVEHTDMSNVPHLGFSIPSISKCLGYPEGTDILLLSNTSTHYLDSKQKSVDGLPDDLYLVVPQTSHVDMRKILARNIEFHEFDDMTDRKLSEIRIKKCYEGLSMLTEIDEYLALFDRVSTILSTQFSLLVQELSQFERVQTASRFAVYVDMASVPLMLFDEANPETKMISDQCIQQAKRAREELERHAKVSMDIEACAKQLSKDAEDLRLEDMDLPGICEEIESYVFYDKQAILSTQKYSQELVELCLKRRNNIMEQIFNSPDRINKSKLNKAMNLAASLSQLRSNYRKLQDMISECVDLLEKPFQEMKDTVNRYLQAQGCSRNTMQKSMHLLRPEFHESQIRIKKTTKSCRKLIDQLNIELDQLGFVRLGDILIKAESEQTLTRSEEIQETQVVSFFCQAESSPNKEQFPKPEQDSILESSIDEGSTSFESTPPSSPPDVGSNNYFQAVFQYFAKPTSSPSSSAK.

Residues 21–299 form the Protein kinase domain; it reads LFNDESIGKG…TDIFEFQPVT (279 aa). ATP is bound by residues 27-35 and lysine 49; that span reads IGKGAYSEV. The active-site Proton acceptor is aspartate 149. Residues 758-798 form a disordered region; that stretch reads SPNKEQFPKPEQDSILESSIDEGSTSFESTPPSSPPDVGSN.

It belongs to the protein kinase superfamily. Ser/Thr protein kinase family. Interacts with allo-1 (via N-terminus); the interaction is direct. In terms of tissue distribution, expressed in oocytes.

It is found in the cytoplasm. The enzyme catalyses L-seryl-[protein] + ATP = O-phospho-L-seryl-[protein] + ADP + H(+). The catalysed reaction is L-threonyl-[protein] + ATP = O-phospho-L-threonyl-[protein] + ADP + H(+). Functionally, serine/threonine-protein kinase, which plays a role in regulating allophagy, an autophagic process in which paternal organelles, including mitochondria and membranous organelles, are degraded in embryos. Phosphorylates the allophagy receptor allo-1, which is required for allophagy. The protein is Inhibitor of nuclear factor kappa-B kinase epsilon subunit homolog 1 of Caenorhabditis elegans.